We begin with the raw amino-acid sequence, 563 residues long: Sulfite reductase [NADPH] hemoprotein beta-component (563 aa).

Residues Cys-427, Cys-433, Cys-472, and Cys-476 each contribute to the [4Fe-4S] cluster site. Cys-476 is a binding site for siroheme.

This sequence belongs to the nitrite and sulfite reductase 4Fe-4S domain family. Alpha(8)-beta(8). The alpha component is a flavoprotein, the beta component is a hemoprotein. Siroheme is required as a cofactor. The cofactor is [4Fe-4S] cluster.

The catalysed reaction is hydrogen sulfide + 3 NADP(+) + 3 H2O = sulfite + 3 NADPH + 4 H(+). Its pathway is sulfur metabolism; hydrogen sulfide biosynthesis; hydrogen sulfide from sulfite (NADPH route): step 1/1. Component of the sulfite reductase complex that catalyzes the 6-electron reduction of sulfite to sulfide. This is one of several activities required for the biosynthesis of L-cysteine from sulfate. This is Sulfite reductase [NADPH] hemoprotein beta-component from Acidithiobacillus ferrooxidans (strain ATCC 53993 / BNL-5-31) (Leptospirillum ferrooxidans (ATCC 53993)).